We begin with the raw amino-acid sequence, 328 residues long: Dolichyl-diphosphooligosaccharide--protein glycosyltransferase subunit MAGT1 (328 aa).

Residues 1–22 (MLHKLLIVVFLVVCLHDMRLNG) form the signal peptide. Residues 23 to 177 (QKKKETLLSE…DVHIRVIRPP (155 aa)) are Extracellular-facing. A Thioredoxin domain is found at 40–168 (WVSKRAVVRL…LARWVADRTD (129 aa)). N-linked (GlcNAc...) asparagine glycosylation is present at Asn64. An intrachain disulfide couples Cys80 to Cys83. A helical transmembrane segment spans residues 178-198 (NYAGPLMLGLLLAFIGSLAYL). Residues 199–202 (RRNN) lie on the Cytoplasmic side of the membrane. A helical membrane pass occupies residues 203-223 (LEFLFNKNVWAFSALCFVLIM). At 224–257 (TSGQMWNHIRGPPYAHKNPNTGQVSYIHGSSQAQ) the chain is on the extracellular side. Residues 258-278 (FVAETHIVLLFNAAVTIGMVL) form a helical membrane-spanning segment. Residues 279–293 (LHEAATSGLDIVKRK) lie on the Cytoplasmic side of the membrane. The helical transmembrane segment at 294-314 (IMCVAGIGLVVLFFSWLLSVF) threads the bilayer. At 315–328 (RAKYHGYPYSFLFG) the chain is on the extracellular side.

Belongs to the OST3/OST6 family. As to quaternary structure, accessory component of the STT3B-containing form of the oligosaccharyltransferase (OST) complex.

Its subcellular location is the cell membrane. The protein localises to the endoplasmic reticulum. It is found in the endoplasmic reticulum membrane. The protein operates within protein modification; protein glycosylation. Its function is as follows. Accessory component of the STT3B-containing form of the N-oligosaccharyl transferase (OST) complex which catalyzes the transfer of a high mannose oligosaccharide from a lipid-linked oligosaccharide donor to an asparagine residue within an Asn-X-Ser/Thr consensus motif in nascent polypeptide chains. Involved in N-glycosylation of STT3B-dependent substrates. Specifically required for the glycosylation of a subset of acceptor sites that are near cysteine residues; in this function seems to act redundantly with TUSC3. In its oxidized form proposed to form transient mixed disulfides with a glycoprotein substrate to facilitate access of STT3B to the unmodified acceptor site. Also has oxidoreductase-independent functions in the STT3B-containing OST complex possibly involving substrate recognition. Could indirectly play a role in Mg(2+) transport. The sequence is that of Dolichyl-diphosphooligosaccharide--protein glycosyltransferase subunit MAGT1 from Danio rerio (Zebrafish).